Here is a 1129-residue protein sequence, read N- to C-terminus: PAN2-PAN3 deadenylation complex catalytic subunit PAN2 (1129 aa).

WD repeat units lie at residues 20-60 (PPAV…YTSY), 104-146 (PDFK…DTLP), 148-183 (DAQYTIMKRAGQYLCAATKTGGIHILDSNSLSVIKV), 186-226 (GHTG…FSLK), and 280-319 (LYDSYLAGFEMAPSGEAFALADSNSNVHLWGSPAKVHFPE). The interval 320 to 457 (YSNPTEFADH…DLHLDDVTRK (138 aa)) is linker. Residues 396–427 (RTKRRNQIEVTRQTDRSSDSLTPPKFLSEKSR) are disordered. The USP domain maps to 458 to 830 (DVPAMYGNVE…LPSVLTFQTK (373 aa)). One can recognise an Exonuclease domain in the interval 880 to 1052 (VAIDAEFIRL…IEDATTALKL (173 aa)). A divalent metal cation is bound by residues Asp883, Glu885, Asp992, and Asp1045. Positions 1083 to 1129 (APGSGNRNSMPAGMTATGAGRDTPEPMTTPKKGGAFGGVGFRSPMRR) are disordered.

Belongs to the peptidase C19 family. PAN2 subfamily. In terms of assembly, forms a heterotrimer with an asymmetric homodimer of the regulatory subunit PAN3 to form the poly(A)-nuclease (PAN) deadenylation complex. A divalent metal cation serves as cofactor.

It localises to the cytoplasm. It carries out the reaction Exonucleolytic cleavage of poly(A) to 5'-AMP.. Its activity is regulated as follows. Positively regulated by the regulatory subunit PAN3. Its function is as follows. Catalytic subunit of the poly(A)-nuclease (PAN) deadenylation complex, one of two cytoplasmic mRNA deadenylases involved in mRNA turnover. PAN specifically shortens poly(A) tails of RNA and the activity is stimulated by poly(A)-binding protein PAB1. PAN deadenylation is followed by rapid degradation of the shortened mRNA tails by the CCR4-NOT complex. Deadenylated mRNAs are then degraded by two alternative mechanisms, namely exosome-mediated 3'-5' exonucleolytic degradation, or deadenylation-dependent mRNA decaping and subsequent 5'-3' exonucleolytic degradation by XRN1. May also be involved in post-transcriptional maturation of mRNA poly(A) tails. The sequence is that of PAN2-PAN3 deadenylation complex catalytic subunit PAN2 from Phaeosphaeria nodorum (strain SN15 / ATCC MYA-4574 / FGSC 10173) (Glume blotch fungus).